We begin with the raw amino-acid sequence, 546 residues long: Cation/calcium exchanger 5 (546 aa).

Helical transmembrane passes span 13–33 (ALCLTLISILIFFFLTTTTIP), 88–108 (NLFFSIPILSLLILLHFYILI), 134–154 (AVTLLALGNGAPDVFASVAAL), 163–183 (FGAILSAGTFVSAFVVGFVAI), 194–214 (SFVRDVLFYLIAALFLFYVYL), 218–238 (IFVWQAIGFVGFYIFFVGFVF), 323–343 (SANIVFCPFALLYTCNSFVQL), 356–376 (LPLWLVVLFMTSSLAFLHFTV), 388–408 (VIVVAFIMSVFWISTIAGELL), 423–445 (ALLGLTVLAWGNSVGDLVADVAV), 455–475 (MAGCFAGPMFNMLVGLGSALV), 492–512 (VGIVIAFVFLLLSLMGSLLVI), and 522–542 (FWGICLVGLYVAFTFVSLIIA).

It belongs to the Ca(2+):cation antiporter (CaCA) (TC 2.A.19) family. Cation/calcium exchanger (CCX) subfamily.

Its subcellular location is the cell membrane. Its function is as follows. Membrane-localized H(+)-dependent K(+) and Na(+) transporter. The protein is Cation/calcium exchanger 5 (CCX5) of Arabidopsis thaliana (Mouse-ear cress).